Reading from the N-terminus, the 316-residue chain is Pantothenate kinase (316 aa).

An ATP-binding site is contributed by 95 to 102 (GSVAVGKS).

Belongs to the prokaryotic pantothenate kinase family.

The protein resides in the cytoplasm. The catalysed reaction is (R)-pantothenate + ATP = (R)-4'-phosphopantothenate + ADP + H(+). The protein operates within cofactor biosynthesis; coenzyme A biosynthesis; CoA from (R)-pantothenate: step 1/5. The chain is Pantothenate kinase from Salmonella gallinarum (strain 287/91 / NCTC 13346).